The primary structure comprises 659 residues: UDP-glucuronate:xylan alpha-glucuronosyltransferase 1 (659 aa).

The span at 1 to 14 (MANSPAAPAPTTTT) shows a compositional bias: low complexity. The disordered stretch occupies residues 1–20 (MANSPAAPAPTTTTGGDSRR). A helical; Signal-anchor for type II membrane protein membrane pass occupies residues 70 to 90 (FQIVKLLLFILLSATLFTIIY). Mn(2+) is bound by residues D416 and D418. Residues 416-418 (DAD), 445-447 (NSG), 472-476 (NGGDQ), and 526-531 (HYLGMK) each bind substrate. A Mn(2+)-binding site is contributed by H526.

This sequence belongs to the glycosyltransferase 8 family. Glycogenin subfamily. It depends on Mn(2+) as a cofactor.

Its subcellular location is the golgi apparatus membrane. Functionally, glycosyltransferase required for the addition of both glucuronic acid and 4-O-methylglucuronic acid branches to xylan in stem cell walls. In association with GUX2, is responsible for almost all of the substitutions of the xylan backbone in stem glucuronoxylan. This is UDP-glucuronate:xylan alpha-glucuronosyltransferase 1 (GUX1) from Arabidopsis thaliana (Mouse-ear cress).